The sequence spans 237 residues: Cysteine-rich venom protein DIS3 (237 aa).

The first 18 residues, 1 to 18, serve as a signal peptide directing secretion; sequence MFVFILLSLAAVLQQSFG. One can recognise an SCP domain in the interval 37–165; that stretch reads VDKHNAFRRS…SYDYFYVCQY (129 aa). 7 cysteine pairs are disulfide-bonded: Cys74–Cys152, Cys91–Cys166, Cys147–Cys163, Cys185–Cys192, Cys188–Cys197, Cys201–Cys234, and Cys219–Cys232. Positions 201-234 constitute a ShKT domain; sequence CSREDVFTNCKSLVAKSNCQDDYIRKNCLATCFC.

Belongs to the CRISP family. As to expression, expressed by the venom gland.

The protein resides in the secreted. In terms of biological role, weakly blocks contraction of smooth muscle elicited by high potassium-induced depolarization, but does not block caffeine-stimulated contraction. May target voltage-gated calcium channels on smooth muscle. In Dispholidus typus (Boomslang), this protein is Cysteine-rich venom protein DIS3.